The sequence spans 106 residues: Iron-sulfur cluster assembly protein CyaY (106 aa).

It belongs to the frataxin family.

Its function is as follows. Involved in iron-sulfur (Fe-S) cluster assembly. May act as a regulator of Fe-S biogenesis. This Salmonella arizonae (strain ATCC BAA-731 / CDC346-86 / RSK2980) protein is Iron-sulfur cluster assembly protein CyaY.